The chain runs to 216 residues: MNTIIPISPINNLKTRLSEFLTLEERKNLLFNMLRDIFKALKGLNIYAISKDPEILEFCNNLGAKTIEEKGKGLNQALNQAFSVVNEDLLIVPADIPLIRESHIKEIKKLKEEFEAIIAPSRGGGTNLLYLSRASLINLRYEGFSFLKHLEEFKRNKVSYYIYDSFYLSIDINTPEDLGEIFIHGDGSYTKRYLESLNIKVEPKHSSAGRFKIYRE.

Belongs to the CofC family. Homodimer.

It carries out the reaction (2S)-2-phospholactate + GTP + H(+) = (2S)-lactyl-2-diphospho-5'-guanosine + diphosphate. It participates in cofactor biosynthesis; coenzyme F420 biosynthesis. Guanylyltransferase that catalyzes the activation of (2S)-2-phospholactate (2-PL) as (2S)-lactyl-2-diphospho-5'-guanosine, via the condensation of 2-PL with GTP. It is involved in the biosynthesis of coenzyme F420, a hydride carrier cofactor. The chain is 2-phospho-L-lactate guanylyltransferase from Methanocaldococcus infernus (strain DSM 11812 / JCM 15783 / ME).